The chain runs to 232 residues: Large ribosomal subunit protein uL1 (232 aa).

Belongs to the universal ribosomal protein uL1 family. Part of the 50S ribosomal subunit.

Binds directly to 23S rRNA. The L1 stalk is quite mobile in the ribosome, and is involved in E site tRNA release. In terms of biological role, protein L1 is also a translational repressor protein, it controls the translation of the L11 operon by binding to its mRNA. In Cereibacter sphaeroides (strain ATCC 17025 / ATH 2.4.3) (Rhodobacter sphaeroides), this protein is Large ribosomal subunit protein uL1.